A 429-amino-acid chain; its full sequence is Adenylosuccinate synthetase (429 aa).

GTP-binding positions include 12–18 (GDEGKGK) and 40–42 (GHT). Aspartate 13 acts as the Proton acceptor in catalysis. Residues aspartate 13 and glycine 40 each contribute to the Mg(2+) site. IMP is bound by residues 13–16 (DEGK), 38–41 (NAGH), threonine 129, arginine 143, glutamine 223, threonine 238, and arginine 302. Catalysis depends on histidine 41, which acts as the Proton donor. 298 to 304 (TVTGRKR) contributes to the substrate binding site. Residues arginine 304, 330-332 (KLD), and 412-414 (STS) each bind GTP.

The protein belongs to the adenylosuccinate synthetase family. In terms of assembly, homodimer. It depends on Mg(2+) as a cofactor.

It localises to the cytoplasm. It carries out the reaction IMP + L-aspartate + GTP = N(6)-(1,2-dicarboxyethyl)-AMP + GDP + phosphate + 2 H(+). It functions in the pathway purine metabolism; AMP biosynthesis via de novo pathway; AMP from IMP: step 1/2. In terms of biological role, plays an important role in the de novo pathway of purine nucleotide biosynthesis. Catalyzes the first committed step in the biosynthesis of AMP from IMP. The protein is Adenylosuccinate synthetase of Rhizorhabdus wittichii (strain DSM 6014 / CCUG 31198 / JCM 15750 / NBRC 105917 / EY 4224 / RW1) (Sphingomonas wittichii).